A 59-amino-acid chain; its full sequence is Small ribosomal subunit protein bS21 (59 aa).

This sequence belongs to the bacterial ribosomal protein bS21 family.

In Acholeplasma laidlawii (strain PG-8A), this protein is Small ribosomal subunit protein bS21.